Here is a 388-residue protein sequence, read N- to C-terminus: MEPSPAAGGLETTRLVSPRDRGGAGGSLRLKSLFTEPSEPLPEESKPVEMPFHHCHRDPLPPPGLTPERLHARRQLYAACAVCFVFMAGEVVGGYLAHSLAIMTDAAHLLADVGSMMGSLFSLWLSTRPATRTMTFGWHRSETLGALASVVSLWMVTGILLYLAFVRLLHSDYHIEGGAMLLTASIAVCANLLMAFVLHQAGPPHSHGSRGAEYAPLEEGPEEPLPLGNTSVRAAFVHVLGDLLQSFGVLAASILIYFKPQYKAADPISTFLFSICALGSTAPTLRDVLRILMEGTPRNVGFEPVRDTLLSVPGVRATHELHLWALTLTYHVASAHLAIDSTADPEAVLAEASSRLYSRFGFSSCTLQVEQYQPEMAQCLRCQEPPQA.

A disordered region spans residues 1–46 (MEPSPAAGGLETTRLVSPRDRGGAGGSLRLKSLFTEPSEPLPEESK). The Cytoplasmic portion of the chain corresponds to 1–75 (MEPSPAAGGL…TPERLHARRQ (75 aa)). A helical membrane pass occupies residues 76–96 (LYAACAVCFVFMAGEVVGGYL). The Lumenal segment spans residues 97–105 (AHSLAIMTD). A helical membrane pass occupies residues 106 to 126 (AAHLLADVGSMMGSLFSLWLS). Zn(2+) is bound by residues H108 and D112. Residues 127–145 (TRPATRTMTFGWHRSETLG) lie on the Cytoplasmic side of the membrane. A helical transmembrane segment spans residues 146–166 (ALASVVSLWMVTGILLYLAFV). Over 167–177 (RLLHSDYHIEG) the chain is Lumenal. The helical transmembrane segment at 178–198 (GAMLLTASIAVCANLLMAFVL) threads the bilayer. Residues 199–235 (HQAGPPHSHGSRGAEYAPLEEGPEEPLPLGNTSVRAA) lie on the Cytoplasmic side of the membrane. The chain crosses the membrane as a helical span at residues 236–256 (FVHVLGDLLQSFGVLAASILI). 2 residues coordinate Zn(2+): H238 and D242. Topologically, residues 257–264 (YFKPQYKA) are lumenal. A helical transmembrane segment spans residues 265–285 (ADPISTFLFSICALGSTAPTL). Topologically, residues 286 to 388 (RDVLRILMEG…CLRCQEPPQA (103 aa)) are cytoplasmic. A Dityrosine (Tyr-Tyr) (interchain with Y-372) cross-link involves residue Y357. Y372 participates in a covalent cross-link: Dityrosine (Tyr-Tyr) (interchain with Y-357).

It belongs to the cation diffusion facilitator (CDF) transporter (TC 2.A.4) family. SLC30A subfamily. As to quaternary structure, homodimer; dityrosine-linked. Homodimerization seems specific of the human protein and enhances the zinc transport efficiency. Interacts with TMEM163. Post-translationally, homodimerization through dityrosine bonds is stimulated by oxidative stress.

It localises to the cytoplasmic vesicle. Its subcellular location is the secretory vesicle. It is found in the synaptic vesicle membrane. The protein resides in the synapse. The protein localises to the synaptosome. It localises to the late endosome membrane. Its subcellular location is the lysosome membrane. It catalyses the reaction Zn(2+)(in) + 2 H(+)(out) = Zn(2+)(out) + 2 H(+)(in). In terms of biological role, probable proton-coupled zinc ion antiporter mediating the import of zinc from cytoplasm into synaptic vesicles and participating to cellular zinc ion homeostasis in the brain. The polypeptide is Probable proton-coupled zinc antiporter SLC30A3 (Homo sapiens (Human)).